The sequence spans 525 residues: Peptide chain release factor 3 (525 aa).

The 268-residue stretch at 9-276 folds into the tr-type G domain; it reads AKRRTFAIIS…GFTRYAPAPQ (268 aa). GTP contacts are provided by residues 18 to 25, 86 to 90, and 140 to 143; these read SHPDAGKT, DTPGH, and NKFD.

It belongs to the TRAFAC class translation factor GTPase superfamily. Classic translation factor GTPase family. PrfC subfamily.

It is found in the cytoplasm. In terms of biological role, increases the formation of ribosomal termination complexes and stimulates activities of RF-1 and RF-2. It binds guanine nucleotides and has strong preference for UGA stop codons. It may interact directly with the ribosome. The stimulation of RF-1 and RF-2 is significantly reduced by GTP and GDP, but not by GMP. This chain is Peptide chain release factor 3, found in Francisella tularensis subsp. tularensis (strain WY96-3418).